Consider the following 597-residue polypeptide: Putative Xaa-Pro dipeptidyl-peptidase (597 aa).

Active-site charge relay system residues include S224, D336, and H367.

The protein belongs to the peptidase S15 family.

It catalyses the reaction Hydrolyzes Xaa-Pro-|- bonds to release unblocked, N-terminal dipeptides from substrates including Ala-Pro-|-p-nitroanilide and (sequentially) Tyr-Pro-|-Phe-Pro-|-Gly-Pro-|-Ile.. The polypeptide is Putative Xaa-Pro dipeptidyl-peptidase (Bacillus anthracis).